We begin with the raw amino-acid sequence, 288 residues long: ATP synthase subunit a (288 aa).

The next 6 helical transmembrane spans lie at 47–67 (LDSM…FWMV), 104–124 (LIAP…LMDL), 157–177 (DPNI…FYSI), 199–219 (PIVQ…TLIA), 237–257 (LIFI…SVPW), and 258–278 (AIFH…LTIV).

It belongs to the ATPase A chain family. As to quaternary structure, F-type ATPases have 2 components, CF(1) - the catalytic core - and CF(0) - the membrane proton channel. CF(1) has five subunits: alpha(3), beta(3), gamma(1), delta(1), epsilon(1). CF(0) has three main subunits: a(1), b(2) and c(9-12). The alpha and beta chains form an alternating ring which encloses part of the gamma chain. CF(1) is attached to CF(0) by a central stalk formed by the gamma and epsilon chains, while a peripheral stalk is formed by the delta and b chains.

The protein resides in the cell inner membrane. Its function is as follows. Key component of the proton channel; it plays a direct role in the translocation of protons across the membrane. This is ATP synthase subunit a from Psychrobacter arcticus (strain DSM 17307 / VKM B-2377 / 273-4).